Reading from the N-terminus, the 30-residue chain is Cliotide T20 (30 aa).

Residues 1–30 constitute a cross-link (cyclopeptide (Gly-Asn)); it reads GSAIRCGESCLLGKCYTPGCTCDRPICKKN. 3 cysteine pairs are disulfide-bonded: Cys-6–Cys-20, Cys-10–Cys-22, and Cys-15–Cys-27.

Post-translationally, contains 3 disulfide bonds. This is a cyclic peptide. In terms of tissue distribution, expressed in root nodules but not in seed.

Its function is as follows. Probably participates in a plant defense mechanism. Active against Gram-negative bacterium E.coli ATCC 700926 (MIC=0.5 uM) under low-salt conditions. Not active against Gram-positive bacterium S.aureus ATCC 12600 up to a concentration of 100 uM under low-salt conditions. Exhibits immunomodulatory activity but no cytotoxicity in vitro. This is Cliotide T20 from Clitoria ternatea (Butterfly pea).